We begin with the raw amino-acid sequence, 308 residues long: Aspartate carbamoyltransferase catalytic subunit (308 aa).

Carbamoyl phosphate-binding residues include arginine 59 and threonine 60. Lysine 87 is a binding site for L-aspartate. Carbamoyl phosphate contacts are provided by arginine 109, histidine 137, and glutamine 140. L-aspartate-binding residues include arginine 170 and arginine 224. 2 residues coordinate carbamoyl phosphate: glycine 265 and proline 266.

Belongs to the aspartate/ornithine carbamoyltransferase superfamily. ATCase family. In terms of assembly, heterododecamer (2C3:3R2) of six catalytic PyrB chains organized as two trimers (C3), and six regulatory PyrI chains organized as three dimers (R2).

It carries out the reaction carbamoyl phosphate + L-aspartate = N-carbamoyl-L-aspartate + phosphate + H(+). It participates in pyrimidine metabolism; UMP biosynthesis via de novo pathway; (S)-dihydroorotate from bicarbonate: step 2/3. In terms of biological role, catalyzes the condensation of carbamoyl phosphate and aspartate to form carbamoyl aspartate and inorganic phosphate, the committed step in the de novo pyrimidine nucleotide biosynthesis pathway. This chain is Aspartate carbamoyltransferase catalytic subunit, found in Flavobacterium johnsoniae (strain ATCC 17061 / DSM 2064 / JCM 8514 / BCRC 14874 / CCUG 350202 / NBRC 14942 / NCIMB 11054 / UW101) (Cytophaga johnsonae).